Reading from the N-terminus, the 461-residue chain is V-type ATP synthase beta chain (461 aa).

It belongs to the ATPase alpha/beta chains family.

Its function is as follows. Produces ATP from ADP in the presence of a proton gradient across the membrane. The V-type beta chain is a regulatory subunit. In Clostridium botulinum (strain 657 / Type Ba4), this protein is V-type ATP synthase beta chain.